The primary structure comprises 323 residues: Glyoxylate/hydroxypyruvate reductase B (323 aa).

Catalysis depends on residues R237 and E266. H285 functions as the Proton donor in the catalytic mechanism.

The protein belongs to the D-isomer specific 2-hydroxyacid dehydrogenase family. GhrB subfamily. Homodimer.

The protein resides in the cytoplasm. It carries out the reaction glycolate + NADP(+) = glyoxylate + NADPH + H(+). The catalysed reaction is (R)-glycerate + NAD(+) = 3-hydroxypyruvate + NADH + H(+). It catalyses the reaction (R)-glycerate + NADP(+) = 3-hydroxypyruvate + NADPH + H(+). Its function is as follows. Catalyzes the NADPH-dependent reduction of glyoxylate and hydroxypyruvate into glycolate and glycerate, respectively. The chain is Glyoxylate/hydroxypyruvate reductase B from Klebsiella pneumoniae (strain 342).